The sequence spans 242 residues: Mannose-P-dolichol utilization defect 1 protein homolog (242 aa).

The PQ-loop 1 domain maps to 37 to 95 (LSRGLGFAITLGSILLFVPQILKIQAARSAQGISAASQLLALVGAIGTASYSYRSGFVF). 7 consecutive transmembrane segments (helical) span residues 40–60 (GLGFAITLGSILLFVPQILKI), 68–88 (GISAASQLLALVGAIGTASYS), 98–118 (WGDSFFVAVQLVIIILQIFLF), 120–140 (GQTMLSVGFLGIVSAVAYGVV), 148–168 (TLTAVQTAGIPIVVVSKLLQI), 180–200 (LSLISVFLQFAGTLARVFTSV), and 207–227 (LLIVSYSTAAVLNGLIFAQFF). Residues 152-202 (VQTAGIPIVVVSKLLQISQNYRAQSTGQLSLISVFLQFAGTLARVFTSVQD) form the PQ-loop 2 domain.

Belongs to the MPDU1 (TC 2.A.43.3) family.

It is found in the membrane. This Caenorhabditis elegans protein is Mannose-P-dolichol utilization defect 1 protein homolog.